A 592-amino-acid chain; its full sequence is Probable 6-phosphofructo-2-kinase C222.13c (592 aa).

The tract at residues 1-80 is disordered; that stretch reads MSNTGSARTE…PANDVEKMEV (80 aa). A compositionally biased stretch (basic and acidic residues) spans 57–66; that stretch reads SIFKREELTP. Residue 150 to 157 participates in ATP binding; sequence GIPATGKS. Active-site residues include Asp-235 and Cys-266. Residue Arg-300 coordinates beta-D-fructose 6-phosphate. His-527 functions as the Proton donor in the catalytic mechanism.

It localises to the cytoplasm. The protein resides in the nucleus. The catalysed reaction is beta-D-fructose 6-phosphate + ATP = beta-D-fructose 2,6-bisphosphate + ADP + H(+). Functionally, synthesis of fructose 2,6-bisphosphate. This Schizosaccharomyces pombe (strain 972 / ATCC 24843) (Fission yeast) protein is Probable 6-phosphofructo-2-kinase C222.13c.